The sequence spans 698 residues: Polyribonucleotide nucleotidyltransferase (698 aa).

2 residues coordinate Mg(2+): Asp490 and Asp496. One can recognise a KH domain in the interval 558-617; it reads PVIYTMRIPQDKIGALIGPGGKNIKRITETTDTKIDINDDGVVQIAAVNGDKLAMAKAEI. The S1 motif domain maps to 627 to 695; the sequence is NKIYKGKVVS…NNGKVRLSRK (69 aa).

It belongs to the polyribonucleotide nucleotidyltransferase family. Mg(2+) is required as a cofactor.

It is found in the cytoplasm. The enzyme catalyses RNA(n+1) + phosphate = RNA(n) + a ribonucleoside 5'-diphosphate. Involved in mRNA degradation. Catalyzes the phosphorolysis of single-stranded polyribonucleotides processively in the 3'- to 5'-direction. In Elusimicrobium minutum (strain Pei191), this protein is Polyribonucleotide nucleotidyltransferase.